A 349-amino-acid polypeptide reads, in one-letter code: MSELRGKVQTVLGQIEPDQLGRTMTHEHLTMSFECSHVPPAPGDEGLSLAPIEMKHLHWLQQNPYSHHENLLLNQELEAVKEELLCYRKAGGGTIVENTTTGINRNLPALKQLAKETGVHVIAGAGYYVDVTHSEETRKMTVEKLTDVIVSEVLHGADGTDIRCGVIGEIGTSWPITESEKKVLQATAHAQTRLGCPVIIHPGRDNRAPVEVIRILQEAGGDISKTVMSHLDRSIYDHGELLEFARMGSYLEYDLFGTEVLNYQFNCNVDMPSDSQRVQSLKFLIQEGYEDRILIAHDIHTKHRLTKYGGHGFSHILKNIVPKMLSRGITQNQVDKILIENPKRWLTFK.

A divalent metal cation contacts are provided by His26, His28, Glu169, His201, His230, and Asp298.

Belongs to the metallo-dependent hydrolases superfamily. Phosphotriesterase family. A divalent metal cation is required as a cofactor.

It is found in the cytoplasm. Its subcellular location is the cytosol. The catalysed reaction is N-acetyltaurine + H2O = taurine + acetate. It carries out the reaction N-propanoyltaurine + H2O = propanoate + taurine. The enzyme catalyses N-acetyl-L-methionine + H2O = L-methionine + acetate. It catalyses the reaction N-acetyl-L-isoleucine + H2O = L-isoleucine + acetate. The catalysed reaction is N-acetyl-L-leucine + H2O = L-leucine + acetate. It carries out the reaction N-acetyl-L-valine + H2O = L-valine + acetate. N-acetyltaurine hydrolase that catalyzes the hydrolysis of N-acetyltaurine into taurine and acetate. PTER also acts on other N-acetyl amino acids (Met, Ile, Leu, Val) and N-propionyltaurine, but at lower rates. The chain is N-acetyltaurine hydrolase (pter) from Danio rerio (Zebrafish).